Reading from the N-terminus, the 165-residue chain is Ribosome maturation factor RimM (165 aa).

The 72-residue stretch at 94–165 (EDEFYIADLN…YVVLNYQREI (72 aa)) folds into the PRC barrel domain.

It belongs to the RimM family. In terms of assembly, binds ribosomal protein uS19.

It is found in the cytoplasm. Functionally, an accessory protein needed during the final step in the assembly of 30S ribosomal subunit, possibly for assembly of the head region. Essential for efficient processing of 16S rRNA. May be needed both before and after RbfA during the maturation of 16S rRNA. It has affinity for free ribosomal 30S subunits but not for 70S ribosomes. This is Ribosome maturation factor RimM from Rickettsia felis (strain ATCC VR-1525 / URRWXCal2) (Rickettsia azadi).